Here is a 157-residue protein sequence, read N- to C-terminus: Probable calcium-binding protein CML15 (157 aa).

EF-hand domains are found at residues 3–38 (DQIR…LGLK), 39–74 (PSGD…DLNE), 78–113 (INSE…MGQP), and 114–149 (LTYK…SAVD). Residues D16, D18, D20, S22, E27, D52, N54, N56, E63, D91, D93, N95, E102, D127, N129, D131, and E138 each contribute to the Ca(2+) site.

Its function is as follows. Potential calcium sensor. This chain is Probable calcium-binding protein CML15 (CML15), found in Arabidopsis thaliana (Mouse-ear cress).